Here is a 366-residue protein sequence, read N- to C-terminus: Ribosomal RNA large subunit methyltransferase M (366 aa).

S-adenosyl-L-methionine is bound by residues S188, 221–224 (CPGG), D240, D260, and D277. Catalysis depends on K306, which acts as the Proton acceptor.

This sequence belongs to the class I-like SAM-binding methyltransferase superfamily. RNA methyltransferase RlmE family. RlmM subfamily. Monomer.

The protein localises to the cytoplasm. The enzyme catalyses cytidine(2498) in 23S rRNA + S-adenosyl-L-methionine = 2'-O-methylcytidine(2498) in 23S rRNA + S-adenosyl-L-homocysteine + H(+). Catalyzes the 2'-O-methylation at nucleotide C2498 in 23S rRNA. In Cronobacter sakazakii (strain ATCC BAA-894) (Enterobacter sakazakii), this protein is Ribosomal RNA large subunit methyltransferase M.